We begin with the raw amino-acid sequence, 338 residues long: Mitoferrin-1 (338 aa).

The interval 1-37 (MELRRGGVGSQAAGRRMDGDCRDGGCGSKDAGSEDYE) is disordered. Solcar repeat units follow at residues 43–131 (ASVS…MKRT), 141–225 (NSHL…LQEQ), and 232–326 (YNPQ…FKYF). 6 helical membrane passes run 45-64 (VSTH…SIMY), 106-125 (GLNV…FACY), 143-162 (HLAN…AVMN), 200-219 (SYTT…FITY), 234-253 (PQSH…AATT), and 301-320 (GIQA…WSVY).

The protein belongs to the mitochondrial carrier (TC 2.A.29) family. As to quaternary structure, interacts with ACB10; this interaction stabilizes SLC25A37 and enhances the function of SLC25A37 to import mitochondrial iron during erythroid differentiation.

The protein resides in the mitochondrion inner membrane. It catalyses the reaction Fe(2+)(in) = Fe(2+)(out). Mitochondrial iron transporter that specifically mediates iron uptake in developing erythroid cells, thereby playing an essential role in heme biosynthesis. The polypeptide is Mitoferrin-1 (Slc25a37) (Rattus norvegicus (Rat)).